The primary structure comprises 213 residues: CDP-diacylglycerol--inositol 3-phosphatidyltransferase (213 aa).

At 1-5 (MPEEN) the chain is on the cytoplasmic side. The helical transmembrane segment at 6 to 26 (IFLFVPNLIGYARIVFAIISF) threads the bilayer. Position 27 (Tyr27) is a topological domain, lumenal. The helical transmembrane segment at 28 to 48 (FMPCCPFTASSFYLLSGLLDA) threads the bilayer. Residues Asp47 and Asp50 each coordinate Mg(2+). Topologically, residues 49–73 (FDGHAARALNQGTRFGAMLDMLTDR) are cytoplasmic. The a CDP-1,2-diacyl-sn-glycerol site is built by Gly51, Arg55, and Thr61. Residues Asp68 and Asp72 each coordinate Mg(2+). Asp72 functions as the Proton acceptor in the catalytic mechanism. A helical membrane pass occupies residues 74–94 (CATMCLLVNLALLYPRATLLF). Position 95 (Gln95) is a topological domain, lumenal. The helical transmembrane segment at 96 to 116 (LSMSLDVASHWLHLHSSVVRG) threads the bilayer. The Cytoplasmic segment spans residues 117–139 (SESHKMIDLSGNPVLRIYYTSRP). The chain crosses the membrane as a helical span at residues 140–160 (ALFTLCAGNELFYCLLYLFNF). Residues 161–174 (SEGPLVGSVGLFRM) are Lumenal-facing. Residues 175–195 (GLWVTAPIALLKSVISVIHLI) form a helical membrane-spanning segment. Residues 196-213 (TAARNMAALDAADRAKKK) lie on the Cytoplasmic side of the membrane.

The protein belongs to the CDP-alcohol phosphatidyltransferase class-I family. Requires Mn(2+) as cofactor. Mg(2+) is required as a cofactor.

It localises to the endoplasmic reticulum membrane. It is found in the cell membrane. The catalysed reaction is a CDP-1,2-diacyl-sn-glycerol + myo-inositol = a 1,2-diacyl-sn-glycero-3-phospho-(1D-myo-inositol) + CMP + H(+). Functionally, catalyzes the biosynthesis of phosphatidylinositol (PtdIns) as well as PtdIns:inositol exchange reaction. May thus act to reduce an excessive cellular PtdIns content. The exchange activity is due to the reverse reaction of PtdIns synthase and is dependent on CMP, which is tightly bound to the enzyme. This chain is CDP-diacylglycerol--inositol 3-phosphatidyltransferase, found in Mus musculus (Mouse).